The chain runs to 202 residues: Superoxide dismutase [Mn] (202 aa).

4 residues coordinate Mn(2+): histidine 27, histidine 82, aspartate 164, and histidine 168.

Belongs to the iron/manganese superoxide dismutase family. In terms of assembly, homodimer. Mn(2+) serves as cofactor.

The catalysed reaction is 2 superoxide + 2 H(+) = H2O2 + O2. In terms of biological role, destroys superoxide anion radicals which are normally produced within the cells and which are toxic to biological systems. The sequence is that of Superoxide dismutase [Mn] (sodA) from Listeria monocytogenes serovar 1/2a (strain ATCC BAA-679 / EGD-e).